A 142-amino-acid chain; its full sequence is Hemoglobin subunit alpha-2 (142 aa).

Position 1 is an N-acetylserine (S1). The 142-residue stretch at 1-142 (SLSTKDKETV…LSRALSEKYR (142 aa)) folds into the Globin domain. H59 provides a ligand contact to O2. A heme b-binding site is contributed by H88.

Belongs to the globin family. Hb2 is a heterotetramer of two alpha-2 chains and two beta chains. Red blood cells.

In terms of biological role, involved in oxygen transport from gills to the various peripheral tissues. The chain is Hemoglobin subunit alpha-2 (hba2) from Trematomus newnesi (Dusky notothen).